Consider the following 82-residue polypeptide: Sec-independent protein translocase protein TatA (82 aa).

The chain crosses the membrane as a helical span at residues 1–21 (MGGISVWQLLIIAVIVVLLFG). The segment at 41-82 (KAMSEDEPAKKDDKDADFEPKSLEEQQKKEAAPESKKDKEQA) is disordered. The segment covering 42-82 (AMSEDEPAKKDDKDADFEPKSLEEQQKKEAAPESKKDKEQA) has biased composition (basic and acidic residues).

The protein belongs to the TatA/E family. The Tat system comprises two distinct complexes: a TatABC complex, containing multiple copies of TatA, TatB and TatC subunits, and a separate TatA complex, containing only TatA subunits. Substrates initially bind to the TatABC complex, which probably triggers association of the separate TatA complex to form the active translocon.

It localises to the cell inner membrane. Its function is as follows. Part of the twin-arginine translocation (Tat) system that transports large folded proteins containing a characteristic twin-arginine motif in their signal peptide across membranes. TatA could form the protein-conducting channel of the Tat system. The polypeptide is Sec-independent protein translocase protein TatA (Vibrio campbellii (strain ATCC BAA-1116)).